A 176-amino-acid polypeptide reads, in one-letter code: Large ribosomal subunit protein uL6 (176 aa).

This sequence belongs to the universal ribosomal protein uL6 family. Part of the 50S ribosomal subunit.

Functionally, this protein binds to the 23S rRNA, and is important in its secondary structure. It is located near the subunit interface in the base of the L7/L12 stalk, and near the tRNA binding site of the peptidyltransferase center. The polypeptide is Large ribosomal subunit protein uL6 (Dechloromonas aromatica (strain RCB)).